The sequence spans 207 residues: 5-nitrosalicylic acid 1,2-dioxygenase (207 aa).

Positions 85–151 constitute a Cupin type-2 domain; the sequence is QLIHPGEEVT…GDKDTLMYVI (67 aa).

It catalyses the reaction 5-nitrosalicylate + O2 = 2-oxo-3-(5-oxofuran-2-ylidene)propanoate + nitrite + H(+). Dioxygenase that catalyzes the cleavage of the aromatic ring of 5-nitrosalicylate (5NSA) without prior removal of the nitro group in biodegradation of 5-nitroanthranilate. This chain is 5-nitrosalicylic acid 1,2-dioxygenase (naaB), found in Bradyrhizobium sp.